Consider the following 25-residue polypeptide: Kappa-conotoxin RIIIJ (25 aa).

4-hydroxyproline is present on residues proline 2, proline 3, proline 7, proline 8, proline 13, proline 15, and proline 21. Disulfide bonds link cysteine 4-cysteine 17, cysteine 5-cysteine 22, and cysteine 12-cysteine 23.

It belongs to the conotoxin M superfamily. Expressed by the venom duct.

The protein localises to the secreted. In terms of biological role, kappa-conotoxins inhibits voltage-gated potassium channels. This toxin dose-dependently and reversibly inhibits the Kv1.2/KCNA2 channel in mammalia. Does not exert protective effect on cardiac tissue when administered after an ischemic event. This is Kappa-conotoxin RIIIJ from Conus radiatus (Rayed cone).